Here is a 160-residue protein sequence, read N- to C-terminus: Transcription elongation factor GreA (160 aa).

Residues 11-38 (YDRLMKELERLKSERPAIIQAIKEAREE) adopt a coiled-coil conformation.

This sequence belongs to the GreA/GreB family.

Its function is as follows. Necessary for efficient RNA polymerase transcription elongation past template-encoded arresting sites. The arresting sites in DNA have the property of trapping a certain fraction of elongating RNA polymerases that pass through, resulting in locked ternary complexes. Cleavage of the nascent transcript by cleavage factors such as GreA or GreB allows the resumption of elongation from the new 3'terminus. GreA releases sequences of 2 to 3 nucleotides. The protein is Transcription elongation factor GreA of Nitratidesulfovibrio vulgaris (strain DSM 19637 / Miyazaki F) (Desulfovibrio vulgaris).